The primary structure comprises 834 residues: MAP kinase phosphatase with leucine-rich repeats protein 1 (834 aa).

The interval Met-1–Lys-103 is disordered. Over residues Gly-36–Leu-78 the composition is skewed to low complexity. The span at Ala-79–Thr-98 shows a compositional bias: polar residues. 10 LRR repeats span residues Glu-160–Leu-181, Asn-183–Leu-204, Ser-206–Lys-226, Ser-229–Glu-251, Asn-252–Asn-273, Ile-274–Leu-292, Ser-298–Leu-319, Asn-321–Ser-342, Ser-345–Leu-366, and Asn-368–Glu-389. Residues Tyr-503–Lys-584 are disordered. Over residues Asn-511–Ile-536 the composition is skewed to polar residues. Composition is skewed to basic and acidic residues over residues Gln-538 to Leu-554 and Lys-569 to Gln-582. Residues Gln-555–Glu-615 are a coiled coil. The Tyrosine-protein phosphatase domain occupies Val-695–Lys-834. Catalysis depends on Cys-778, which acts as the Phosphocysteine intermediate.

This sequence belongs to the protein-tyrosine phosphatase family. Non-receptor class dual specificity subfamily.

It carries out the reaction O-phospho-L-tyrosyl-[protein] + H2O = L-tyrosyl-[protein] + phosphate. It catalyses the reaction O-phospho-L-seryl-[protein] + H2O = L-seryl-[protein] + phosphate. The enzyme catalyses O-phospho-L-threonyl-[protein] + H2O = L-threonyl-[protein] + phosphate. In terms of biological role, probable phosphatase with dual specificity toward Ser/Thr and Tyr-containing proteins. Dephosphorylates pNPP, in vitro. Essential for proper regulation of erkB (erk2) and optimal motility during development. The polypeptide is MAP kinase phosphatase with leucine-rich repeats protein 1 (mpl1) (Dictyostelium discoideum (Social amoeba)).